Consider the following 682-residue polypeptide: Potassium-transporting ATPase ATP-binding subunit (682 aa).

Helical transmembrane passes span 34-54, 58-78, 219-239, and 254-274; these read PVMF…LAMV, IAGS…TVLF, IALT…TATL, and VLVA…LSAI. The active-site 4-aspartylphosphate intermediate is the Asp-307. ATP-binding positions include Asp-344, Glu-348, 377 to 384, and Lys-395; that span reads FTAQSRMS. Asp-518 and Asp-522 together coordinate Mg(2+). A run of 3 helical transmembrane segments spans residues 588 to 608, 616 to 636, and 662 to 682; these read FAII…LNVM, AILS…PLAL, and LVVP…LGLA.

It belongs to the cation transport ATPase (P-type) (TC 3.A.3) family. Type IA subfamily. The system is composed of three essential subunits: KdpA, KdpB and KdpC.

It localises to the cell inner membrane. It carries out the reaction K(+)(out) + ATP + H2O = K(+)(in) + ADP + phosphate + H(+). Its function is as follows. Part of the high-affinity ATP-driven potassium transport (or Kdp) system, which catalyzes the hydrolysis of ATP coupled with the electrogenic transport of potassium into the cytoplasm. This subunit is responsible for energy coupling to the transport system and for the release of the potassium ions to the cytoplasm. The protein is Potassium-transporting ATPase ATP-binding subunit of Salmonella agona (strain SL483).